We begin with the raw amino-acid sequence, 531 residues long: CTP synthase (531 aa).

Residues 1 to 267 (MTKYIFVTGG…DQIVCEHLRL (267 aa)) are amidoligase domain. A CTP-binding site is contributed by Ser13. Residue Ser13 coordinates UTP. Position 14 to 19 (14 to 19 (SLGKGI)) interacts with ATP. Position 54 (Tyr54) interacts with L-glutamine. Asp71 is a binding site for ATP. Positions 71 and 141 each coordinate Mg(2+). CTP contacts are provided by residues 148–150 (DIE), 188–193 (KTKPTQ), and Lys224. UTP-binding positions include 188–193 (KTKPTQ) and Lys224. An ATP-binding site is contributed by 240-242 (RDA). The Glutamine amidotransferase type-1 domain occupies 292–531 (KIALVGKYVE…REFVRASLKE (240 aa)). Gly354 contacts L-glutamine. Residue Cys381 is the Nucleophile; for glutamine hydrolysis of the active site. L-glutamine is bound by residues 382–385 (LGMQ), Glu405, and Arg462. Catalysis depends on residues His507 and Glu509.

It belongs to the CTP synthase family. In terms of assembly, homotetramer.

It catalyses the reaction UTP + L-glutamine + ATP + H2O = CTP + L-glutamate + ADP + phosphate + 2 H(+). The catalysed reaction is L-glutamine + H2O = L-glutamate + NH4(+). The enzyme catalyses UTP + NH4(+) + ATP = CTP + ADP + phosphate + 2 H(+). Its pathway is pyrimidine metabolism; CTP biosynthesis via de novo pathway; CTP from UDP: step 2/2. Its activity is regulated as follows. Allosterically activated by GTP, when glutamine is the substrate; GTP has no effect on the reaction when ammonia is the substrate. The allosteric effector GTP functions by stabilizing the protein conformation that binds the tetrahedral intermediate(s) formed during glutamine hydrolysis. Inhibited by the product CTP, via allosteric rather than competitive inhibition. Functionally, catalyzes the ATP-dependent amination of UTP to CTP with either L-glutamine or ammonia as the source of nitrogen. Regulates intracellular CTP levels through interactions with the four ribonucleotide triphosphates. The chain is CTP synthase from Geobacillus kaustophilus (strain HTA426).